The following is a 2182-amino-acid chain: Autophagy-related protein 2 (2182 aa).

Disordered regions lie at residues 291-375 (SPSL…PLAD), 392-426 (EQDY…ATPR), 523-630 (YTHE…STTL), 663-682 (DIDP…VATP), 736-758 (GAFS…SSVE), and 793-816 (DKKP…SKET). 2 stretches are compositionally biased toward polar residues: residues 303 to 313 (NPPSRQATELS) and 322 to 331 (VSSSQASIRS). A compositionally biased stretch (basic and acidic residues) spans 332–347 (NEPESASHHSLPENDH). Composition is skewed to acidic residues over residues 528–540 (AENE…EQTT) and 613–624 (WDDDYDDPEEEP). Residues 745-758 (HAQQRSSQGTSSVE) show a composition bias toward polar residues. Over residues 793-813 (DKKPSPAEGSKQDTASKDAPS) the composition is skewed to basic and acidic residues.

This sequence belongs to the ATG2 family. In terms of assembly, interacts with ATG18.

The protein localises to the preautophagosomal structure membrane. It localises to the endoplasmic reticulum membrane. It catalyses the reaction a 1,2-diacyl-sn-glycero-3-phosphocholine(in) = a 1,2-diacyl-sn-glycero-3-phosphocholine(out). The enzyme catalyses a 1,2-diacyl-sn-glycero-3-phospho-L-serine(in) = a 1,2-diacyl-sn-glycero-3-phospho-L-serine(out). The catalysed reaction is a 1,2-diacyl-sn-glycero-3-phosphoethanolamine(in) = a 1,2-diacyl-sn-glycero-3-phosphoethanolamine(out). Lipid transfer protein required for autophagosome completion and peroxisome degradation and peroxisome degradation. Tethers the edge of the isolation membrane (IM) to the endoplasmic reticulum (ER) and mediates direct lipid transfer from ER to IM for IM expansion. ATG2 binds to the ER exit site (ERES), which is the membrane source for autophagosome formation, using basic residues in its N-terminal region (NR) and to the expanding edge of the IM through its C-terminal region. The latter binding is assisted by an ATG18-PtdIns3P interaction. ATG2 then extracts phospholipids from the membrane source using its NR and transfers them to ATG9 to the IM through its predicted beta-sheet-rich structure for membrane expansion. Autophagy is required for proper vegetative growth, asexual/sexual reproduction, and full virulence. Autophagy is particularly involved in the biosynthesis of deoxynivalenol (DON), an important virulence determinant. The chain is Autophagy-related protein 2 from Gibberella zeae (strain ATCC MYA-4620 / CBS 123657 / FGSC 9075 / NRRL 31084 / PH-1) (Wheat head blight fungus).